We begin with the raw amino-acid sequence, 130 residues long: Osteocrin (130 aa).

The signal sequence occupies residues 1-25 (MLDWRLASTHFILAMIVMLWGSGKA). Position 129 is an arginine amide (Arg-129).

This sequence belongs to the Osteocrin family. As to quaternary structure, interacts with NPR3. Expressed in skeletal muscle and to a much lesser extent in bone, brown adipose tissue, spleen and testis. Not expressed in neurons.

It localises to the secreted. Functionally, hormone that acts as a ligand for natriuretic peptide receptor NPR3/NPR-C and promotes bone growth and physical endurance in muscle. Acts as a regulator of osteoblast differentiation and bone growth by binding to natriuretic peptide receptor NPR3/NPR-C, thereby preventing binding between NPR3/NPR-C and natriuretic peptides, leading to increase cGMP production. Required to enhance physical endurance: induced following physical exercise in muscle and promotes cGMP production, probably by interacting with NPR3/NPR-C. May act as an autocrine and paracrine factor linked to glucose metabolism in skeletal muscle. This Mus musculus (Mouse) protein is Osteocrin.